The following is a 191-amino-acid chain: Peptidyl-tRNA hydrolase (191 aa).

Tyrosine 17 is a binding site for tRNA. Histidine 22 acts as the Proton acceptor in catalysis. Residues tyrosine 68, asparagine 70, and asparagine 116 each coordinate tRNA.

Belongs to the PTH family. Monomer.

The protein resides in the cytoplasm. It carries out the reaction an N-acyl-L-alpha-aminoacyl-tRNA + H2O = an N-acyl-L-amino acid + a tRNA + H(+). Hydrolyzes ribosome-free peptidyl-tRNAs (with 1 or more amino acids incorporated), which drop off the ribosome during protein synthesis, or as a result of ribosome stalling. Functionally, catalyzes the release of premature peptidyl moieties from peptidyl-tRNA molecules trapped in stalled 50S ribosomal subunits, and thus maintains levels of free tRNAs and 50S ribosomes. This chain is Peptidyl-tRNA hydrolase, found in Francisella tularensis subsp. holarctica (strain FTNF002-00 / FTA).